The primary structure comprises 1342 residues: DNA-directed RNA polymerase subunit beta (1342 aa).

The protein belongs to the RNA polymerase beta chain family. The RNAP catalytic core consists of 2 alpha, 1 beta, 1 beta' and 1 omega subunit. When a sigma factor is associated with the core the holoenzyme is formed, which can initiate transcription.

It catalyses the reaction RNA(n) + a ribonucleoside 5'-triphosphate = RNA(n+1) + diphosphate. Functionally, DNA-dependent RNA polymerase catalyzes the transcription of DNA into RNA using the four ribonucleoside triphosphates as substrates. In Citrobacter koseri (strain ATCC BAA-895 / CDC 4225-83 / SGSC4696), this protein is DNA-directed RNA polymerase subunit beta.